Consider the following 336-residue polypeptide: MELPILPTSIIGSYPKPRWLLRMYNLRELGRLPEEDFREAVRDASVAVLREHERAGIDIPWDGEMGRSEMTEYFTAKIAGFKFYGPIRVWGNAYFNKAAAVSKLEYREPLVLDEFRWVKENTTREIIKVPITGPYTIAEWSFNEYYSSKEELAFDLAKILNKEFKLLEKEGATFIQIDEPAMLNHPDEVSIAVEAINRAVKGVKVKFGLHVCYSNYYLLADYFDDIKVSQFALEAANRNFRDLDYLKKLTHQELGFGVVDVHNPRVESPEEVAKAIRKVMEYIEPERLYINPDCGLKLLDRRIAYQKLVNMVKGVEIVRRELAREGKTSIPFRREV.

Zn(2+)-binding residues include H210, C212, E234, and C294.

It belongs to the archaeal MetE family. Zn(2+) serves as cofactor.

It functions in the pathway amino-acid biosynthesis; L-methionine biosynthesis via de novo pathway. Catalyzes the transfer of a methyl group to L-homocysteine resulting in methionine formation. The physiological methyl donor is unknown. This is Methionine synthase from Thermococcus kodakarensis (strain ATCC BAA-918 / JCM 12380 / KOD1) (Pyrococcus kodakaraensis (strain KOD1)).